Reading from the N-terminus, the 346-residue chain is Phosphoribosylformylglycinamidine cyclo-ligase (346 aa).

This sequence belongs to the AIR synthase family.

The protein localises to the cytoplasm. The catalysed reaction is 2-formamido-N(1)-(5-O-phospho-beta-D-ribosyl)acetamidine + ATP = 5-amino-1-(5-phospho-beta-D-ribosyl)imidazole + ADP + phosphate + H(+). Its pathway is purine metabolism; IMP biosynthesis via de novo pathway; 5-amino-1-(5-phospho-D-ribosyl)imidazole from N(2)-formyl-N(1)-(5-phospho-D-ribosyl)glycinamide: step 2/2. This chain is Phosphoribosylformylglycinamidine cyclo-ligase, found in Bacillus pumilus (strain SAFR-032).